Consider the following 89-residue polypeptide: Small ribosomal subunit protein uS14A (89 aa).

It belongs to the universal ribosomal protein uS14 family. Part of the 30S ribosomal subunit. Contacts proteins S3 and S10.

In terms of biological role, binds 16S rRNA, required for the assembly of 30S particles and may also be responsible for determining the conformation of the 16S rRNA at the A site. The polypeptide is Small ribosomal subunit protein uS14A (Listeria monocytogenes serovar 1/2a (strain ATCC BAA-679 / EGD-e)).